The following is a 186-amino-acid chain: Ribosome-recycling factor (186 aa).

Belongs to the RRF family.

Its subcellular location is the cytoplasm. Its function is as follows. Responsible for the release of ribosomes from messenger RNA at the termination of protein biosynthesis. May increase the efficiency of translation by recycling ribosomes from one round of translation to another. This chain is Ribosome-recycling factor, found in Bordetella avium (strain 197N).